The chain runs to 392 residues: Stilbene synthase 4 (392 aa).

Residue 55 to 58 (KFNR) coordinates substrate. Cys164 is a catalytic residue. Residues Leu267 and 305-307 (GGP) each bind substrate.

This sequence belongs to the thiolase-like superfamily. Chalcone/stilbene synthases family. Homodimer.

Its subcellular location is the cytoplasm. The catalysed reaction is 4-coumaroyl-CoA + 3 malonyl-CoA + 3 H(+) = trans-resveratrol + 4 CO2 + 4 CoA. The protein operates within phytoalexin biosynthesis; 3,4',5-trihydroxystilbene biosynthesis; 3,4',5-trihydroxystilbene from trans-4-coumarate: step 2/2. Functionally, mediates resistance to pathogens which are sensitive to stilbenes. This chain is Stilbene synthase 4, found in Vitis vinifera (Grape).